We begin with the raw amino-acid sequence, 386 residues long: Patatin group M-2 (386 aa).

The first 23 residues, 1-23, serve as a signal peptide directing secretion; it reads MATTKSFLILFFMILATTSSTCA. A PNPLA domain is found at 32 to 229; sequence LSIDGGGIKG…TVGDPALLSL (198 aa). The GXGXXG motif lies at 36 to 41; that stretch reads GGGIKG. The GXSXG motif lies at 75-79; it reads GTSTG. Residue Ser77 is the Nucleophile of the active site. N-linked (GlcNAc...) asparagine glycosylation is present at Asn115. Asp215 (proton acceptor) is an active-site residue. The DGA/G signature appears at 215–217; the sequence is DGG. Residues 321–384 adopt a coiled-coil conformation; the sequence is ENALTGTTTE…DRKKLRANKA (64 aa).

The protein belongs to the patatin family. In terms of tissue distribution, tuber.

It localises to the vacuole. In terms of biological role, probable lipolytic acyl hydrolase (LAH), an activity which is thought to be involved in the response of tubers to pathogens. The polypeptide is Patatin group M-2 (Solanum tuberosum (Potato)).